A 300-amino-acid polypeptide reads, in one-letter code: Probable endonuclease 4 (300 aa).

Zn(2+) is bound by residues H69, H110, E145, D179, H182, H214, D227, H229, and E259.

Belongs to the AP endonuclease 2 family. Requires Zn(2+) as cofactor.

It carries out the reaction Endonucleolytic cleavage to 5'-phosphooligonucleotide end-products.. Functionally, endonuclease IV plays a role in DNA repair. It cleaves phosphodiester bonds at apurinic or apyrimidinic (AP) sites, generating a 3'-hydroxyl group and a 5'-terminal sugar phosphate. The sequence is that of Probable endonuclease 4 from Lachnoclostridium phytofermentans (strain ATCC 700394 / DSM 18823 / ISDg) (Clostridium phytofermentans).